The chain runs to 186 residues: Small ribosomal subunit protein uS4 (186 aa).

In terms of domain architecture, S4 RNA-binding spans 106 to 170; it reads RRLQTIVYRK…SPLKDEDHPI (65 aa). The interval 151-186 is disordered; sequence EEEEVDYSPYSPLKDEDHPIRCEARGESPEETAAEE. The segment covering 163–178 has biased composition (basic and acidic residues); the sequence is LKDEDHPIRCEARGES.

The protein belongs to the universal ribosomal protein uS4 family. Part of the 30S ribosomal subunit. Contacts protein S5. The interaction surface between S4 and S5 is involved in control of translational fidelity.

In terms of biological role, one of the primary rRNA binding proteins, it binds directly to 16S rRNA where it nucleates assembly of the body of the 30S subunit. With S5 and S12 plays an important role in translational accuracy. This chain is Small ribosomal subunit protein uS4, found in Methanopyrus kandleri (strain AV19 / DSM 6324 / JCM 9639 / NBRC 100938).